Consider the following 2191-residue polypeptide: Genome polyprotein (2191 aa).

The N-myristoyl glycine; by host moiety is linked to residue glycine 2. Residues 2-1501 lie on the Cytoplasmic side of the membrane; it reads GAQVSTQKTG…HVSRAFICLQ (1500 aa). The tract at residues 566-582 is amphipathic alpha-helix; the sequence is FYQNDVQNAVERSIVRV. Residues histidine 878 and aspartate 896 each act as for protease 2A activity in the active site. Residues cysteine 913 and cysteine 915 each contribute to the Zn(2+) site. The active-site For protease 2A activity is cysteine 967. Cysteine 973 and histidine 975 together coordinate Zn(2+). The interval 1107 to 1179 is membrane-binding; the sequence is NNGWLKKFTE…EQSAPSQSDQ (73 aa). The segment at 1107-1245 is oligomerization; it reads NNGWLKKFTE…SPGVGKSVAT (139 aa). Positions 1128–1132 are RNA-binding; it reads AIKIQ. Residues 1211–1367 enclose the SF3 helicase domain; the sequence is EKKMSNYIQF…SMYNQNGKIN (157 aa). The Zn(2+) site is built by cysteine 1375, cysteine 1387, and cysteine 1392. The C4-type; degenerate zinc-finger motif lies at 1375 to 1392; that stretch reads CDEECCPVNFKKCCPLVC. The tract at residues 1419-1426 is RNA-binding; the sequence is EYNHRHSV. The tract at residues 1430–1435 is oligomerization; it reads LEALFQ. An intramembrane segment occupies 1502–1517; that stretch reads ALTTFVSVAGIIYIIY. The Cytoplasmic segment spans residues 1518–2191; the sequence is KLFAGFQGAY…TLRRKWLDSF (674 aa). Tyrosine 1527 carries the post-translational modification O-(5'-phospho-RNA)-tyrosine. Positions 1547 to 1725 constitute a Peptidase C3 domain; sequence GPAFEFAVAM…FSAALLKHYF (179 aa). Residues histidine 1586, glutamate 1617, and cysteine 1693 each act as for protease 3C activity in the active site. The RdRp catalytic domain occupies 1956 to 2072; that stretch reads GHLIAFDYSG…SYPWPIDASL (117 aa). Mg(2+) contacts are provided by aspartate 1962 and aspartate 2058.

The protein belongs to the picornaviruses polyprotein family. As to quaternary structure, interacts with capsid protein VP1 and capsid protein VP3 to form heterotrimeric protomers. Interacts with capsid protein VP0, and capsid protein VP3 to form heterotrimeric protomers. Five protomers subsequently associate to form pentamers which serve as building blocks for the capsid. Interacts with capsid protein VP2, capsid protein VP3 and capsid protein VP4 following cleavage of capsid protein VP0. Interacts with host CD55 and FCGRT; these interactions promote virus attachment to the host cell and subsequent internalization. In terms of assembly, interacts with capsid protein VP1 and capsid protein VP3 in the mature capsid. Interacts with host CD55 and FCGRT; these interactions promote virus attachment to the host cell and subsequent internalization. As to quaternary structure, interacts with capsid protein VP0 and capsid protein VP1 to form heterotrimeric protomers. Five protomers subsequently associate to form pentamers which serve as building blocks for the capsid. Interacts with capsid protein VP4 in the mature capsid. Interacts with protein 2C; this interaction may be important for virion morphogenesis. Interacts with host FCGRT; this interaction promotes virus attachment to the host cell and subsequent internalization. Interacts with capsid protein VP1 and capsid protein VP3. In terms of assembly, homodimer. As to quaternary structure, homohexamer; forms a hexameric ring structure with 6-fold symmetry characteristic of AAA+ ATPases. Interacts (via N-terminus) with host RTN3 (via reticulon domain); this interaction is important for viral replication. Interacts with capsid protein VP3; this interaction may be important for virion morphogenesis. Interacts with protein 3CD. In terms of assembly, homodimer. Interacts with host GBF1. Interacts (via GOLD domain) with host ACBD3 (via GOLD domain); this interaction allows the formation of a viral protein 3A/ACBD3 heterotetramer with a 2:2 stoichiometry, which will stimulate the recruitment of host PI4KB in order to synthesize PI4P at the viral RNA replication sites. As to quaternary structure, interacts with RNA-directed RNA polymerase. Interacts with protein 3AB and with RNA-directed RNA polymerase. In terms of assembly, interacts with Viral protein genome-linked and with protein 3CD. Mg(2+) is required as a cofactor. In terms of processing, specific enzymatic cleavages in vivo by the viral proteases yield processing intermediates and the mature proteins. Post-translationally, myristoylation is required for the formation of pentamers during virus assembly. Further assembly of 12 pentamers and a molecule of genomic RNA generates the provirion. During virion maturation, immature virions are rendered infectious following cleavage of VP0 into VP4 and VP2. This maturation seems to be an autocatalytic event triggered by the presence of RNA in the capsid and it is followed by a conformational change infectious virion. In terms of processing, myristoylation is required during RNA encapsidation and formation of the mature virus particle. Post-translationally, VPg is uridylylated by the polymerase into VPg-pUpU. This acts as a nucleotide-peptide primer for the genomic RNA replication.

The protein localises to the virion. It localises to the host cytoplasm. The protein resides in the host cytoplasmic vesicle membrane. It is found in the host nucleus. It catalyses the reaction a ribonucleoside 5'-triphosphate + H2O = a ribonucleoside 5'-diphosphate + phosphate + H(+). The catalysed reaction is Selective cleavage of Tyr-|-Gly bond in the picornavirus polyprotein.. The enzyme catalyses RNA(n) + a ribonucleoside 5'-triphosphate = RNA(n+1) + diphosphate. It carries out the reaction Selective cleavage of Gln-|-Gly bond in the poliovirus polyprotein. In other picornavirus reactions Glu may be substituted for Gln, and Ser or Thr for Gly.. With respect to regulation, replication or transcription is subject to high level of random mutations by the nucleotide analog ribavirin. Functionally, forms an icosahedral capsid of pseudo T=3 symmetry with capsid proteins VP2 and VP3. The capsid is 300 Angstroms in diameter, composed of 60 copies of each capsid protein and enclosing the viral positive strand RNA genome. Capsid protein VP1 mainly forms the vertices of the capsid. Capsid protein VP1 interacts with host cell receptor to provide virion attachment to target host cells. This attachment induces virion internalization. Tyrosine kinases are probably involved in the entry process. After binding to its receptor, the capsid undergoes conformational changes. Capsid protein VP1 N-terminus (that contains an amphipathic alpha-helix) and capsid protein VP4 are externalized. Together, they shape a pore in the host membrane through which viral genome is translocated to host cell cytoplasm. In terms of biological role, forms an icosahedral capsid of pseudo T=3 symmetry with capsid proteins VP2 and VP3. The capsid is 300 Angstroms in diameter, composed of 60 copies of each capsid protein and enclosing the viral positive strand RNA genome. Lies on the inner surface of the capsid shell. After binding to the host receptor, the capsid undergoes conformational changes. Capsid protein VP4 is released, Capsid protein VP1 N-terminus is externalized, and together, they shape a pore in the host membrane through which the viral genome is translocated into the host cell cytoplasm. Its function is as follows. Component of immature procapsids, which is cleaved into capsid proteins VP4 and VP2 after maturation. Allows the capsid to remain inactive before the maturation step. Functionally, cysteine protease that cleaves viral polyprotein and specific host proteins. It is responsible for the autocatalytic cleavage between the P1 and P2 regions, which is the first cleavage occurring in the polyprotein. Also cleaves the host translation initiation factor EIF4G1, in order to shut down the capped cellular mRNA translation. Inhibits the host nucleus-cytoplasm protein and RNA trafficking by cleaving host members of the nuclear pores. Counteracts stress granule formation probably by antagonizing its assembly or promoting its dissassembly. In terms of biological role, plays an essential role in the virus replication cycle by acting as a viroporin. Creates a pore in the host endoplasmic reticulum and as a consequence releases Ca2+ in the cytoplasm of infected cell. In turn, high levels of cytoplasmic calcium may trigger membrane trafficking and transport of viral ER-associated proteins to viroplasms, sites of viral genome replication. Induces and associates with structural rearrangements of intracellular membranes. Displays RNA-binding, nucleotide binding and NTPase activities. May play a role in virion morphogenesis and viral RNA encapsidation by interacting with the capsid protein VP3. Its function is as follows. Localizes the viral replication complex to the surface of membranous vesicles. Together with protein 3CD binds the Cis-Active RNA Element (CRE) which is involved in RNA synthesis initiation. Acts as a cofactor to stimulate the activity of 3D polymerase, maybe through a nucleid acid chaperone activity. Functionally, localizes the viral replication complex to the surface of membranous vesicles. It inhibits host cell endoplasmic reticulum-to-Golgi apparatus transport and causes the disassembly of the Golgi complex, possibly through GBF1 interaction. This would result in depletion of MHC, trail receptors and IFN receptors at the host cell surface. Plays an essential role in viral RNA replication by recruiting ACBD3 and PI4KB at the viral replication sites, thereby allowing the formation of the rearranged membranous structures where viral replication takes place. In terms of biological role, acts as a primer for viral RNA replication and remains covalently bound to viral genomic RNA. VPg is uridylylated prior to priming replication into VPg-pUpU. The oriI viral genomic sequence may act as a template for this. The VPg-pUpU is then used as primer on the genomic RNA poly(A) by the RNA-dependent RNA polymerase to replicate the viral genome. During genome replication, the VPg-RNA linkage is removed by the host TDP2, thereby accelerating replication. During the late stage of the replication cycle, host TDP2 is excluded from sites of viral RNA synthesis and encapsidation, allowing for the generation of progeny virions. Involved in the viral replication complex and viral polypeptide maturation. It exhibits protease activity with a specificity and catalytic efficiency that is different from protease 3C. Protein 3CD binds to the 5'UTR of the viral genome. Its function is as follows. Replicates the viral genomic RNA on the surface of intracellular membranes. May form linear arrays of subunits that propagate along a strong head-to-tail interaction called interface-I. Covalently attaches UMP to a tyrosine of VPg, which is used to prime RNA synthesis. The positive stranded RNA genome is first replicated at virus induced membranous vesicles, creating a dsRNA genomic replication form. This dsRNA is then used as template to synthesize positive stranded RNA genomes. ss(+)RNA genomes are either translated, replicated or encapsidated. Functionally, major viral protease that mediates proteolytic processing of the polyprotein. Cleaves host EIF5B, contributing to host translation shutoff. Also cleaves host PABPC1, contributing to host translation shutoff. Cleaves host NLRP1, triggers host N-glycine-mediated degradation of the autoinhibitory NLRP1 N-terminal fragment. The chain is Genome polyprotein from Echovirus 6 (strain Charles).